Here is a 288-residue protein sequence, read N- to C-terminus: Diaminopimelate epimerase (288 aa).

Asn14 and Asn67 together coordinate substrate. The active-site Proton donor is the Cys76. Residues 77–78 (GN), Asn166, Asn199, and 217–218 (ER) each bind substrate. Cys226 serves as the catalytic Proton acceptor. 227–228 (GT) provides a ligand contact to substrate.

The protein belongs to the diaminopimelate epimerase family. Homodimer.

Its subcellular location is the cytoplasm. The enzyme catalyses (2S,6S)-2,6-diaminopimelate = meso-2,6-diaminopimelate. The protein operates within amino-acid biosynthesis; L-lysine biosynthesis via DAP pathway; DL-2,6-diaminopimelate from LL-2,6-diaminopimelate: step 1/1. Functionally, catalyzes the stereoinversion of LL-2,6-diaminopimelate (L,L-DAP) to meso-diaminopimelate (meso-DAP), a precursor of L-lysine and an essential component of the bacterial peptidoglycan. This is Diaminopimelate epimerase from Bacillus mycoides (strain KBAB4) (Bacillus weihenstephanensis).